The chain runs to 180 residues: Large ribosomal subunit protein uL5 (180 aa).

Belongs to the universal ribosomal protein uL5 family. Part of the 50S ribosomal subunit; part of the 5S rRNA/L5/L18/L25 subcomplex. Contacts the 5S rRNA and the P site tRNA. Forms a bridge to the 30S subunit in the 70S ribosome.

In terms of biological role, this is one of the proteins that bind and probably mediate the attachment of the 5S RNA into the large ribosomal subunit, where it forms part of the central protuberance. In the 70S ribosome it contacts protein S13 of the 30S subunit (bridge B1b), connecting the 2 subunits; this bridge is implicated in subunit movement. Contacts the P site tRNA; the 5S rRNA and some of its associated proteins might help stabilize positioning of ribosome-bound tRNAs. This chain is Large ribosomal subunit protein uL5, found in Lactococcus lactis subsp. lactis (strain IL1403) (Streptococcus lactis).